We begin with the raw amino-acid sequence, 190 residues long: Putative 3-methyladenine DNA glycosylase (190 aa).

Belongs to the DNA glycosylase MPG family.

This is Putative 3-methyladenine DNA glycosylase from Chlamydia abortus (strain DSM 27085 / S26/3) (Chlamydophila abortus).